The following is a 162-amino-acid chain: NADH-quinone oxidoreductase subunit I 1 (162 aa).

2 consecutive 4Fe-4S ferredoxin-type domains span residues 44–74 and 90–119; these read LRTY…VQAA and YKYQ…LTQE. 8 residues coordinate [4Fe-4S] cluster: C54, C57, C60, C64, C99, C102, C105, and C109.

It belongs to the complex I 23 kDa subunit family. In terms of assembly, NDH-1 is composed of 14 different subunits. Subunits NuoA, H, J, K, L, M, N constitute the membrane sector of the complex. Requires [4Fe-4S] cluster as cofactor.

The protein localises to the cell membrane. The enzyme catalyses a quinone + NADH + 5 H(+)(in) = a quinol + NAD(+) + 4 H(+)(out). Its function is as follows. NDH-1 shuttles electrons from NADH, via FMN and iron-sulfur (Fe-S) centers, to quinones in the respiratory chain. The immediate electron acceptor for the enzyme in this species is believed to be ubiquinone. Couples the redox reaction to proton translocation (for every two electrons transferred, four hydrogen ions are translocated across the cytoplasmic membrane), and thus conserves the redox energy in a proton gradient. This chain is NADH-quinone oxidoreductase subunit I 1, found in Symbiobacterium thermophilum (strain DSM 24528 / JCM 14929 / IAM 14863 / T).